The sequence spans 294 residues: 33 kDa chaperonin (294 aa).

2 disulfide bridges follow: C231-C233 and C264-C267.

It belongs to the HSP33 family. Post-translationally, under oxidizing conditions two disulfide bonds are formed involving the reactive cysteines. Under reducing conditions zinc is bound to the reactive cysteines and the protein is inactive.

Its subcellular location is the cytoplasm. Functionally, redox regulated molecular chaperone. Protects both thermally unfolding and oxidatively damaged proteins from irreversible aggregation. Plays an important role in the bacterial defense system toward oxidative stress. This is 33 kDa chaperonin from Aeromonas salmonicida (strain A449).